A 118-amino-acid chain; its full sequence is V-type proton ATPase subunit G 1 (118 aa).

Ala2 is modified (N-acetylalanine).

It belongs to the V-ATPase G subunit family. As to quaternary structure, V-ATPase is a heteromultimeric enzyme made up of two complexes: the ATP-hydrolytic V1 complex and the proton translocation V0 complex. The V1 complex consists of three catalytic AB heterodimers that form a heterohexamer, three peripheral stalks each consisting of EG heterodimers, one central rotor including subunits D and F, and the regulatory subunits C and H. The proton translocation complex V0 consists of the proton transport subunit a, a ring of proteolipid subunits c9c'', rotary subunit d, subunits e and f, and the accessory subunits ATP6AP1/Ac45 and ATP6AP2/PRR. As to expression, kidney; localizes to early distal nephron, encompassing thick ascending limbs and distal convoluted tubules (at protein level). Ubiquitous.

Its subcellular location is the apical cell membrane. Functionally, subunit of the V1 complex of vacuolar(H+)-ATPase (V-ATPase), a multisubunit enzyme composed of a peripheral complex (V1) that hydrolyzes ATP and a membrane integral complex (V0) that translocates protons. V-ATPase is responsible for acidifying and maintaining the pH of intracellular compartments and in some cell types, is targeted to the plasma membrane, where it is responsible for acidifying the extracellular environment. In aerobic conditions, involved in intracellular iron homeostasis, thus triggering the activity of Fe(2+) prolyl hydroxylase (PHD) enzymes, and leading to HIF1A hydroxylation and subsequent proteasomal degradation. This Homo sapiens (Human) protein is V-type proton ATPase subunit G 1 (ATP6V1G1).